Reading from the N-terminus, the 245-residue chain is Dehydrogenase/reductase SDR family member 6 (245 aa).

NAD(+) contacts are provided by residues 16-18 (QGI), D37, and D58. R144 is a substrate binding site. Residue Y147 is the Proton acceptor of the active site. Residues K151 and 180-184 (VDTPS) each bind NAD(+). 2 residues coordinate substrate: R188 and R205.

This sequence belongs to the short-chain dehydrogenases/reductases (SDR) family. Homotetramer.

It is found in the cytoplasm. It carries out the reaction cis-4-hydroxy-L-proline + NAD(+) = 4-oxo-L-proline + NADH + H(+). The catalysed reaction is (R)-3-hydroxybutanoate + NAD(+) = acetoacetate + NADH + H(+). The protein operates within amino-acid metabolism. Its pathway is siderophore biosynthesis. In terms of biological role, NAD(H)-dependent dehydrogenase/reductase with a preference for cyclic substrates. Catalyzes stereoselective conversion of 4-oxo-L-proline to cis-4-hydroxy-L-proline, likely a detoxification mechanism for ketoprolines. Mediates the formation of 2,5-dihydroxybenzoate (2,5-DHBA), a siderophore that chelates free cytoplasmic iron, thereby regulating iron transport and homeostasis while protecting cells against free radical-induced oxidative stress. The iron-siderophore complex is imported into mitochondria, providing an iron source for mitochondrial metabolic processes in particular heme synthesis. May act as a 3-hydroxybutyrate dehydrogenase. The polypeptide is Dehydrogenase/reductase SDR family member 6 (bdh2) (Xenopus laevis (African clawed frog)).